A 274-amino-acid polypeptide reads, in one-letter code: Large ribosomal subunit protein uL2 (274 aa).

The interval V223–K274 is disordered.

Belongs to the universal ribosomal protein uL2 family. In terms of assembly, part of the 50S ribosomal subunit. Forms a bridge to the 30S subunit in the 70S ribosome.

Its function is as follows. One of the primary rRNA binding proteins. Required for association of the 30S and 50S subunits to form the 70S ribosome, for tRNA binding and peptide bond formation. It has been suggested to have peptidyltransferase activity; this is somewhat controversial. Makes several contacts with the 16S rRNA in the 70S ribosome. The sequence is that of Large ribosomal subunit protein uL2 from Shewanella baltica (strain OS223).